A 160-amino-acid chain; its full sequence is Thialysine N-epsilon-acetyltransferase (160 aa).

Positions 4–159 constitute an N-acetyltransferase domain; sequence FEIVTVTPDH…DGAAINKFAD (156 aa). Residues 84 to 86, 92 to 97, 123 to 126, and 130 to 133 contribute to the acetyl-CoA site; these read LYI, RMGLAR, NKNA, and YDTV.

This sequence belongs to the acetyltransferase family. In terms of assembly, homodimer.

The catalysed reaction is S-(2-aminoethyl)-L-cysteine + acetyl-CoA = S-(2-acetamidoethyl)-L-cysteine + CoA + H(+). The enzyme catalyses O-(2-aminoethyl)-L-serine + acetyl-CoA = O-(2-acetamidoethyl)-L-serine + CoA + H(+). It carries out the reaction S-(2-aminoethyl)-homocysteine + acetyl-CoA = S-(2-acetamidoethyl)-homocysteine + CoA + H(+). Functionally, catalyzes the N-acetylation of the amino acid thialysine (S-(2-aminoethyl)-L-cysteine), a L-lysine analog with the 4-methylene group substituted with a sulfur. Substrate specificity: thialysine &gt; O-(2-aminoethyl)-L-serine &gt; S-(2-aminoethyl)-D,L-homocysteine. Does not act on polyamines, such as spermidine and spermine, nor on diamines putrescine and cadaverine. The protein is Thialysine N-epsilon-acetyltransferase of Caenorhabditis elegans.